A 721-amino-acid chain; its full sequence is Dolichyl-diphosphooligosaccharide--protein glycosyltransferase subunit STT3B (721 aa).

Residues 1 to 25 (MAAATALDSLPAPLRSLRLKTKQQE) are Cytoplasmic-facing. Residues 26–46 (LLLRVSALALIYVLAFVVRLF) traverse the membrane as a helical segment. Residues 47 to 129 (SVLRYESMIH…VHIREVCVLT (83 aa)) lie on the Lumenal side of the membrane. The DXD motif 1 motif lies at 57–59 (EFD). Asp-59 contributes to the Mn(2+) binding site. The chain crosses the membrane as a helical span at residues 130 to 148 (APFFAANTTLVAYAFGREI). Residues 149–150 (WD) are Cytoplasmic-facing. The helical transmembrane segment at 151–168 (SGAGLVAAALIAVCPGYI) threads the bilayer. Residues 169 to 179 (SRSVAGSYDNE) lie on the Lumenal side of the membrane. Mn(2+)-binding residues include Asp-177 and Glu-179. Residues 177–179 (DNE) carry the DXD motif 2 motif. Residues 180–199 (GVAIFALLLTFYLFVRAVNT) form a helical membrane-spanning segment. The Cytoplasmic portion of the chain corresponds to 200–201 (GS). Residues 202–216 (LAWSLASAFGYFYMV) form a helical membrane-spanning segment. Topologically, residues 217-221 (SAWGG) are lumenal. A helical transmembrane segment spans residues 222-238 (YVFIINLLPLYVLVLLV). Topologically, residues 239-243 (TGRYS) are cytoplasmic. The chain crosses the membrane as a helical span at residues 244 to 269 (QRLYVAYNSTYVLGMLLAMQIRFVGF). Residues 270–277 (QHVQSGEH) are Lumenal-facing. A helical transmembrane segment spans residues 278-297 (MAAMGVFFLLQVFFFLDWVK). Residues 298-313 (YLLNDAKLFKSFLRIT) lie on the Cytoplasmic side of the membrane. Residues 314 to 334 (LTCVITVGTLALGIGTASGYI) traverse the membrane as a helical segment. Topologically, residues 335–367 (SPWTGRFYSLLDPTYAKDHIPIIASVSEHQPTA) are lumenal. Positions 359 to 362 (SVSE) match the SVSE motif motif. The helical transmembrane segment at 368-390 (WSSFMFDFHILLFLFPAGLYFCF) threads the bilayer. The Cytoplasmic segment spans residues 391-396 (KRLSDA). The helical transmembrane segment at 397 to 413 (TIFIVMYGLTSMYFAGV) threads the bilayer. Residues 414–417 (MVRL) are Lumenal-facing. Arg-416 lines the dolichyl diphosphooligosaccharide pocket. The chain crosses the membrane as a helical span at residues 418 to 439 (ILVAAPAVCLISAIAASATIKN). At 440-471 (LTTLIRTKSKSPQTVSGKSSGSKAAAKGAVDQ) the chain is on the cytoplasmic side. Residues 472 to 492 (SLPFQQNVAIALLLGAFYLLS) traverse the membrane as a helical segment. The Lumenal segment spans residues 493-721 (RYAVHCTWVT…YKVKPPKNRS (229 aa)). Residues 548 to 550 (WWD) are interacts with target acceptor peptide in protein substrate. The short motif at 548–552 (WWDYG) is the WWDYG motif element. Tyr-553 contributes to the dolichyl diphosphooligosaccharide binding site. Residues Asn-560 and Asn-567 are each glycosylated (N-linked (GlcNAc...) asparagine). Residue Asn-571 is glycosylated (N-linked (GlcNAc...) (high mannose) asparagine). Positions 615–622 (DINKFLWM) match the DK motif motif.

This sequence belongs to the STT3 family. As to quaternary structure, component of the oligosaccharyltransferase (OST) complex. Requires Mg(2+) as cofactor. The cofactor is Mn(2+).

It localises to the endoplasmic reticulum membrane. The enzyme catalyses a di-trans,poly-cis-dolichyl diphosphooligosaccharide + L-asparaginyl-[protein] = N(4)-(oligosaccharide-(1-&gt;4)-N-acetyl-beta-D-glucosaminyl-(1-&gt;4)-N-acetyl-beta-D-glucosaminyl)-L-asparaginyl-[protein] + a di-trans,poly-cis-dolichyl diphosphate + H(+). It participates in protein modification; protein glycosylation. In terms of biological role, catalytic subunit of the oligosaccharyl transferase (OST) complex that catalyzes the initial transfer of a defined glycan (Glc(3)Man(9)GlcNAc(2) in eukaryotes) from the lipid carrier dolichol-pyrophosphate to an asparagine residue within an Asn-X-Ser/Thr consensus motif in nascent polypeptide chains, the first step in protein N-glycosylation. N-glycosylation occurs cotranslationally and the complex associates with the Sec61 complex at the channel-forming translocon complex that mediates protein translocation across the endoplasmic reticulum (ER). All subunits are required for a maximal enzyme activity. This subunit contains the active site and the acceptor peptide and donor lipid-linked oligosaccharide (LLO) binding pockets. The polypeptide is Dolichyl-diphosphooligosaccharide--protein glycosyltransferase subunit STT3B (STT3B) (Oryza sativa subsp. japonica (Rice)).